A 234-amino-acid polypeptide reads, in one-letter code: Large ribosomal subunit protein uL1 (234 aa).

Belongs to the universal ribosomal protein uL1 family. In terms of assembly, part of the 50S ribosomal subunit.

Functionally, binds directly to 23S rRNA. The L1 stalk is quite mobile in the ribosome, and is involved in E site tRNA release. In terms of biological role, protein L1 is also a translational repressor protein, it controls the translation of the L11 operon by binding to its mRNA. The chain is Large ribosomal subunit protein uL1 from Helicobacter pylori (strain G27).